The primary structure comprises 312 residues: Serine protease 48 (312 aa).

An N-terminal signal peptide occupies residues 1 to 22 (MGPAGLKVLLLLFLGAFQGSFT). In terms of domain architecture, Peptidase S1 spans 40–276 (IVGGQDAALG…YQKWISAIIS (237 aa)). A disulfide bridge links Cys65 with Cys81. Catalysis depends on charge relay system residues His80 and Asp126. Asn149 carries an N-linked (GlcNAc...) asparagine glycan. 3 disulfide bridges follow: Cys160/Cys235, Cys190/Cys214, and Cys225/Cys253. Ser229 (charge relay system) is an active-site residue. An N-linked (GlcNAc...) asparagine glycan is attached at Asn263.

The protein belongs to the peptidase S1 family.

The protein resides in the secreted. The chain is Serine protease 48 (Prss48) from Mus musculus (Mouse).